The sequence spans 297 residues: Mitochondrial nicotinamide adenine dinucleotide transporter SLC25A52 (297 aa).

3 Solcar repeats span residues 28–108 (VGEM…LSCL), 116–200 (PEFA…IKEH), and 209–296 (AHLV…LLKF). The next 6 helical transmembrane spans lie at 34–51 (YLCG…TYPI), 85–105 (LPPL…YEDL), 118–138 (FATH…FTPL), 179–199 (ILFR…PIKE), 215–235 (FIGG…INVV), and 268–289 (LFRG…INAT).

This sequence belongs to the mitochondrial carrier (TC 2.A.29) family.

The protein resides in the mitochondrion inner membrane. The catalysed reaction is NAD(+)(in) = NAD(+)(out). Functionally, mitochondrial membrane carrier protein that mediates the import of NAD(+) into mitochondria. Compared to SLC25A51, SLC25A52-mediated transport is not essential for the import of NAD(+) in mitochondria. The transport mechanism, uniport or antiport, its electrogenicity and substrate selectivity, remain to be elucidated. The sequence is that of Mitochondrial nicotinamide adenine dinucleotide transporter SLC25A52 from Homo sapiens (Human).